A 235-amino-acid chain; its full sequence is Large ribosomal subunit protein uL1 (235 aa).

The protein belongs to the universal ribosomal protein uL1 family. In terms of assembly, part of the 50S ribosomal subunit.

Functionally, binds directly to 23S rRNA. The L1 stalk is quite mobile in the ribosome, and is involved in E site tRNA release. Protein L1 is also a translational repressor protein, it controls the translation of the L11 operon by binding to its mRNA. The polypeptide is Large ribosomal subunit protein uL1 (Prochlorococcus marinus (strain MIT 9313)).